A 297-amino-acid chain; its full sequence is Glutamyl-Q tRNA(Asp) synthetase (297 aa).

L-glutamate contacts are provided by residues 7–11 (RFAPS) and glutamate 43. Positions 10–20 (PSPTGPLHFGS) match the 'HIGH' region motif. Residues cysteine 99, cysteine 101, tyrosine 122, and cysteine 126 each contribute to the Zn(2+) site. L-glutamate-binding residues include tyrosine 182 and arginine 200. The 'KMSKS' region motif lies at 238–242 (KLSKQ). Lysine 241 is an ATP binding site.

Belongs to the class-I aminoacyl-tRNA synthetase family. GluQ subfamily. Zn(2+) is required as a cofactor.

Its function is as follows. Catalyzes the tRNA-independent activation of glutamate in presence of ATP and the subsequent transfer of glutamate onto a tRNA(Asp). Glutamate is transferred on the 2-amino-5-(4,5-dihydroxy-2-cyclopenten-1-yl) moiety of the queuosine in the wobble position of the QUC anticodon. The polypeptide is Glutamyl-Q tRNA(Asp) synthetase (Burkholderia pseudomallei (strain K96243)).